Reading from the N-terminus, the 165-residue chain is Nucleotide-binding protein TGRD_519 (165 aa).

The protein belongs to the YajQ family.

Nucleotide-binding protein. This chain is Nucleotide-binding protein TGRD_519, found in Endomicrobium trichonymphae.